The following is a 234-amino-acid chain: Interleukin-27 subunit alpha (234 aa).

The N-terminal stretch at 1–28 (MGQVTGDLGWRLSLLLLPLLLVQAGSWG) is a signal peptide. Asn85 carries N-linked (GlcNAc...) asparagine glycosylation. The interval 160-185 (KEEEDKEEEEEEEEEEKKLPLGALGG) is disordered. Residues 161–174 (EEEDKEEEEEEEEE) are compositionally biased toward acidic residues.

This sequence belongs to the IL-6 superfamily. Heterodimer with EBI3; not disulfide-linked. This heterodimer is known as interleukin IL-27. In terms of processing, O-glycosylated. Expressed in macrophages and dendritic cells.

It localises to the secreted. In terms of biological role, associates with EBI3 to form the IL-27 interleukin, a heterodimeric cytokine which functions in innate immunity. IL-27 has pro- and anti-inflammatory properties, that can regulate T-helper cell development, suppress T-cell proliferation, stimulate cytotoxic T-cell activity, induce isotype switching in B-cells, and that has diverse effects on innate immune cells. Among its target cells are CD4 T-helper cells which can differentiate in type 1 effector cells (TH1), type 2 effector cells (TH2) and IL17 producing helper T-cells (TH17). It drives rapid clonal expansion of naive but not memory CD4 T-cells. It also strongly synergizes with IL-12 to trigger interferon-gamma/IFN-gamma production of naive CD4 T-cells, binds to the cytokine receptor WSX-1/TCCR which appears to be required but not sufficient for IL-27-mediated signal transduction. IL-27 potentiate the early phase of TH1 response and suppress TH2 and TH17 differentiation. It induces the differentiation of TH1 cells via two distinct pathways, p38 MAPK/TBX21- and ICAM1/ITGAL/ERK-dependent pathways. It also induces STAT1, STAT3, STAT4 and STAT5 phosphorylation and activates TBX21/T-Bet via STAT1 with resulting IL12RB2 up-regulation, an event crucial to TH1 cell commitment. It suppresses the expression of GATA3, the inhibitor TH1 cells development. In CD8 T-cells, it activates STATs as well as GZMB. IL-27 reveals to be a potent inhibitor of TH17 cell development and of IL-17 production. Indeed IL27 alone is also able to inhibit the production of IL17 by CD4 and CD8 T-cells. While IL-27 suppressed the development of pro-inflammatory Th17 cells via STAT1, it inhibits the development of anti-inflammatory inducible regulatory T-cells, iTreg, independently of STAT1. IL-27 also has an effect on cytokine production, it suppresses pro-inflammatory cytokine production such as IL2, IL4, IL5 and IL6 and activates suppressors of cytokine signaling such as SOCS1 and SOCS3. Apart from suppression of cytokine production, IL-27 also antagonizes the effects of some cytokines such as IL6 through direct effects on T-cells. Another important role of IL-27 is its antitumor activity as well as its antiangiogenic activity with activation of production of antiangiogenic chemokines such as IP-10/CXCL10 and MIG/CXCL9. The chain is Interleukin-27 subunit alpha (Il27) from Mus musculus (Mouse).